The primary structure comprises 291 residues: GENVEKIGEGTYGVVYKARDRVTNETIALKKIRLEQEDEGVPSTAIREISLLKEMQHRNIVRLQDVVHSDKRLYLVFEYLDLDLKKHMDSSPEFIKDPRQVKMFLYQMLCGIAYCHSHRVLHRDLKPQNLLIDRRTNSLKLADFGLARAFGIPVRTFTHEVVTLWYRAPEILLGSRHYSTPVDVWSVGCIFAEMANRRPLSPGDSEIDELFKIFRILGTPNEDTWPGVTSLPDFKSTFPRWPSKDLATVVPNLEPAGLDLLNSMLCLDPTKRITARSAVEHEYFKDIKFVP.

The Protein kinase domain maps to 1–284 (GENVEKIGEG…ARSAVEHEYF (284 aa)). Residues 7 to 15 (IGEGTYGVV) and lysine 30 each bind ATP. Threonine 11 carries the post-translational modification Phosphothreonine. Tyrosine 12 bears the Phosphotyrosine mark. Aspartate 124 (proton acceptor) is an active-site residue. Threonine 158 is modified (phosphothreonine; by CAK).

Belongs to the protein kinase superfamily. CMGC Ser/Thr protein kinase family. CDC2/CDKX subfamily. As to expression, found in most organs including root, young leaf, stem, vegetative meristem and flower bud.

The enzyme catalyses L-seryl-[protein] + ATP = O-phospho-L-seryl-[protein] + ADP + H(+). The catalysed reaction is L-threonyl-[protein] + ATP = O-phospho-L-threonyl-[protein] + ADP + H(+). It carries out the reaction [DNA-directed RNA polymerase] + ATP = phospho-[DNA-directed RNA polymerase] + ADP + H(+). Its activity is regulated as follows. Phosphorylation at Thr-11 or Tyr-12 inactivates the enzyme, while phosphorylation at Thr-158 activates it. Its function is as follows. Plays a key role in the control of the eukaryotic cell cycle. Component of the kinase complex that phosphorylates the repetitive C-terminus of RNA polymerase II. In Medicago sativa (Alfalfa), this protein is Cell division control protein 2 homolog 1 (CDC2A).